Reading from the N-terminus, the 141-residue chain is Putative pre-16S rRNA nuclease (141 aa).

The protein belongs to the YqgF nuclease family.

It localises to the cytoplasm. Could be a nuclease involved in processing of the 5'-end of pre-16S rRNA. In Syntrophomonas wolfei subsp. wolfei (strain DSM 2245B / Goettingen), this protein is Putative pre-16S rRNA nuclease.